Reading from the N-terminus, the 359-residue chain is MDNRTIVILGITGSIGIQTVEVIQSLGNFHILGGTYHKNKDLADAISQKHNLSNLISTSRGYDLAIEMLEKLRPDITLVAIPGFSSLILALKAIEVSKRVLLASKEALVCGGWLIKEKLKNCETNLIPVDSEHTALMQIYEEPFEEVIITSSGGALRDWELHNLHNAKPKDVLKHPVWKMGERITVDSATMVNKAFEVFEASEYFNIPISKIRVLIHKEGIVHAGILLCDSTIKLHLGFADMKVPIAYALTYPERKYKKPSWPDLVNTNLSFENVDETRYPAFKLLYEISENYAKRTAYNASDEIAVQNFLEEKIKFTDIPKVIEKVVESTNGQVRDLKDLIQIDKESRKKALEVIRCL.

NADPH contacts are provided by threonine 12, glycine 13, serine 14, isoleucine 15, lysine 38, and asparagine 39. Residue lysine 105 coordinates 1-deoxy-D-xylulose 5-phosphate. Glutamate 106 is an NADPH binding site. Aspartate 130 provides a ligand contact to Mn(2+). Residues serine 131, glutamate 132, serine 152, and histidine 175 each coordinate 1-deoxy-D-xylulose 5-phosphate. A Mn(2+)-binding site is contributed by glutamate 132. NADPH is bound at residue glycine 181. 4 residues coordinate 1-deoxy-D-xylulose 5-phosphate: serine 188, asparagine 193, lysine 194, and glutamate 197. Glutamate 197 contacts Mn(2+).

The protein belongs to the DXR family. Mg(2+) is required as a cofactor. Requires Mn(2+) as cofactor.

The catalysed reaction is 2-C-methyl-D-erythritol 4-phosphate + NADP(+) = 1-deoxy-D-xylulose 5-phosphate + NADPH + H(+). It functions in the pathway isoprenoid biosynthesis; isopentenyl diphosphate biosynthesis via DXP pathway; isopentenyl diphosphate from 1-deoxy-D-xylulose 5-phosphate: step 1/6. In terms of biological role, catalyzes the NADPH-dependent rearrangement and reduction of 1-deoxy-D-xylulose-5-phosphate (DXP) to 2-C-methyl-D-erythritol 4-phosphate (MEP). This Pseudothermotoga lettingae (strain ATCC BAA-301 / DSM 14385 / NBRC 107922 / TMO) (Thermotoga lettingae) protein is 1-deoxy-D-xylulose 5-phosphate reductoisomerase.